The following is a 153-amino-acid chain: MAL-like protein (153 aa).

Helical transmembrane passes span 22–42, 59–79, 97–117, and 131–151; these read LFLT…FLVW, VMYV…SYLF, GTTG…TIVS, and AASF…FSIY. The MARVEL domain occupies 22–153; that stretch reads LFLTIPFAFF…ILHAFSIYYH (132 aa).

It belongs to the MAL family.

The protein resides in the membrane. The sequence is that of MAL-like protein (MALL) from Homo sapiens (Human).